The following is a 339-amino-acid chain: DNA-directed RNA polymerase subunit alpha (339 aa).

An alpha N-terminal domain (alpha-NTD) region spans residues 1 to 233; sequence MVREEVAGST…DLFLPFLHAE (233 aa). Residues 264–339 are alpha C-terminal domain (alpha-CTD); that stretch reads KKGIPLNCIF…IDLLKNKLSF (76 aa).

This sequence belongs to the RNA polymerase alpha chain family. In plastids the minimal PEP RNA polymerase catalytic core is composed of four subunits: alpha, beta, beta', and beta''. When a (nuclear-encoded) sigma factor is associated with the core the holoenzyme is formed, which can initiate transcription.

It is found in the plastid. The protein resides in the chloroplast. It catalyses the reaction RNA(n) + a ribonucleoside 5'-triphosphate = RNA(n+1) + diphosphate. DNA-dependent RNA polymerase catalyzes the transcription of DNA into RNA using the four ribonucleoside triphosphates as substrates. The sequence is that of DNA-directed RNA polymerase subunit alpha from Secale strictum (Mountain rye).